A 98-amino-acid chain; its full sequence is Putative pterin-4-alpha-carbinolamine dehydratase (98 aa).

This sequence belongs to the pterin-4-alpha-carbinolamine dehydratase family.

It catalyses the reaction (4aS,6R)-4a-hydroxy-L-erythro-5,6,7,8-tetrahydrobiopterin = (6R)-L-erythro-6,7-dihydrobiopterin + H2O. This Parasynechococcus marenigrum (strain WH8102) protein is Putative pterin-4-alpha-carbinolamine dehydratase.